The following is a 350-amino-acid chain: Putative isomerase YbhH (350 aa).

Belongs to the PrpF family.

This is Putative isomerase YbhH (ybhH) from Escherichia coli O6:H1 (strain CFT073 / ATCC 700928 / UPEC).